The chain runs to 318 residues: Methionyl-tRNA formyltransferase (318 aa).

115–118 contacts (6S)-5,6,7,8-tetrahydrofolate; sequence SLLP.

The protein belongs to the Fmt family.

It carries out the reaction L-methionyl-tRNA(fMet) + (6R)-10-formyltetrahydrofolate = N-formyl-L-methionyl-tRNA(fMet) + (6S)-5,6,7,8-tetrahydrofolate + H(+). In terms of biological role, attaches a formyl group to the free amino group of methionyl-tRNA(fMet). The formyl group appears to play a dual role in the initiator identity of N-formylmethionyl-tRNA by promoting its recognition by IF2 and preventing the misappropriation of this tRNA by the elongation apparatus. The protein is Methionyl-tRNA formyltransferase of Deinococcus radiodurans (strain ATCC 13939 / DSM 20539 / JCM 16871 / CCUG 27074 / LMG 4051 / NBRC 15346 / NCIMB 9279 / VKM B-1422 / R1).